Reading from the N-terminus, the 206-residue chain is Potassium-transporting ATPase KdpC subunit (206 aa).

Residues valine 14 to isoleucine 34 form a helical membrane-spanning segment.

This sequence belongs to the KdpC family. The system is composed of three essential subunits: KdpA, KdpB and KdpC.

The protein resides in the cell inner membrane. Functionally, part of the high-affinity ATP-driven potassium transport (or Kdp) system, which catalyzes the hydrolysis of ATP coupled with the electrogenic transport of potassium into the cytoplasm. This subunit acts as a catalytic chaperone that increases the ATP-binding affinity of the ATP-hydrolyzing subunit KdpB by the formation of a transient KdpB/KdpC/ATP ternary complex. The polypeptide is Potassium-transporting ATPase KdpC subunit (Xanthomonas axonopodis pv. citri (strain 306)).